The primary structure comprises 372 residues: Alanine dehydrogenase 2 (372 aa).

H95 is a catalytic residue. 169 to 199 (KVTIIGGGQAGTNAAKIALGLGADVTILDVN) provides a ligand contact to NAD(+).

It belongs to the AlaDH/PNT family.

The enzyme catalyses L-alanine + NAD(+) + H2O = pyruvate + NH4(+) + NADH + H(+). It functions in the pathway amino-acid degradation; L-alanine degradation via dehydrogenase pathway; NH(3) and pyruvate from L-alanine: step 1/1. May play a role in cell wall synthesis as L-alanine is an important constituent of the peptidoglycan layer. The chain is Alanine dehydrogenase 2 (ald2) from Staphylococcus aureus (strain MRSA252).